Here is a 193-residue protein sequence, read N- to C-terminus: MALIPMVVEQTSRGERSYDIYSRLLKERVIFLSGEVEDNMANLIVAQLLFLESENPEKDINLYINSPGGSVTAGMAIYDTMQFIKPDVRTLCVGQACSMGAFLLAGGAAGKRAALPHARVMIHQPLGGFRGQASDIQIHAQEILKIKQTLNERLAFHTGQPFEVIERDTDRDNFMSAEDAKNYGLIDSVLVKR.

The Nucleophile role is filled by Ser-98. Residue His-123 is part of the active site.

This sequence belongs to the peptidase S14 family. Fourteen ClpP subunits assemble into 2 heptameric rings which stack back to back to give a disk-like structure with a central cavity, resembling the structure of eukaryotic proteasomes.

It localises to the cytoplasm. The enzyme catalyses Hydrolysis of proteins to small peptides in the presence of ATP and magnesium. alpha-casein is the usual test substrate. In the absence of ATP, only oligopeptides shorter than five residues are hydrolyzed (such as succinyl-Leu-Tyr-|-NHMec, and Leu-Tyr-Leu-|-Tyr-Trp, in which cleavage of the -Tyr-|-Leu- and -Tyr-|-Trp bonds also occurs).. Cleaves peptides in various proteins in a process that requires ATP hydrolysis. Has a chymotrypsin-like activity. Plays a major role in the degradation of misfolded proteins. The polypeptide is ATP-dependent Clp protease proteolytic subunit (Mannheimia succiniciproducens (strain KCTC 0769BP / MBEL55E)).